The primary structure comprises 239 residues: Lactate utilization protein A (239 aa).

It belongs to the LutA/YkgE family.

In terms of biological role, is involved in L-lactate degradation and allows cells to grow with lactate as the sole carbon source. The polypeptide is Lactate utilization protein A (Bacillus cytotoxicus (strain DSM 22905 / CIP 110041 / 391-98 / NVH 391-98)).